Reading from the N-terminus, the 116-residue chain is Large ribosomal subunit protein bL17 (116 aa).

This sequence belongs to the bacterial ribosomal protein bL17 family. In terms of assembly, part of the 50S ribosomal subunit. Contacts protein L32.

In Prochlorococcus marinus (strain MIT 9215), this protein is Large ribosomal subunit protein bL17.